The sequence spans 284 residues: Pantothenate synthetase (284 aa).

Position 30–37 (30–37) interacts with ATP; the sequence is MGNLHDGH. Residue histidine 37 is the Proton donor of the active site. Glutamine 61 contributes to the (R)-pantoate binding site. Beta-alanine is bound at residue glutamine 61. 149–152 lines the ATP pocket; it reads GEKD. Glutamine 155 serves as a coordination point for (R)-pantoate. Residues valine 178 and 186 to 189 contribute to the ATP site; that span reads LSSR.

The protein belongs to the pantothenate synthetase family. In terms of assembly, homodimer.

The protein localises to the cytoplasm. It catalyses the reaction (R)-pantoate + beta-alanine + ATP = (R)-pantothenate + AMP + diphosphate + H(+). Its pathway is cofactor biosynthesis; (R)-pantothenate biosynthesis; (R)-pantothenate from (R)-pantoate and beta-alanine: step 1/1. Its function is as follows. Catalyzes the condensation of pantoate with beta-alanine in an ATP-dependent reaction via a pantoyl-adenylate intermediate. The chain is Pantothenate synthetase from Enterobacter sp. (strain 638).